A 65-amino-acid polypeptide reads, in one-letter code: Photosystem II reaction center protein Z (65 aa).

2 consecutive transmembrane segments (helical) span residues 8–28 (AVFA…VALA) and 41–61 (YAGA…DSVV).

This sequence belongs to the PsbZ family. As to quaternary structure, PSII is composed of 1 copy each of membrane proteins PsbA, PsbB, PsbC, PsbD, PsbE, PsbF, PsbH, PsbI, PsbJ, PsbK, PsbL, PsbM, PsbT, PsbX, PsbY, PsbZ, Psb30/Ycf12, at least 3 peripheral proteins of the oxygen-evolving complex and a large number of cofactors. It forms dimeric complexes.

It localises to the plastid. It is found in the cyanelle thylakoid membrane. Its function is as follows. May control the interaction of photosystem II (PSII) cores with the light-harvesting antenna, regulates electron flow through the 2 photosystem reaction centers. PSII is a light-driven water plastoquinone oxidoreductase, using light energy to abstract electrons from H(2)O, generating a proton gradient subsequently used for ATP formation. The sequence is that of Photosystem II reaction center protein Z from Cyanophora paradoxa.